Reading from the N-terminus, the 508-residue chain is Phosphoenolpyruvate carboxylase (508 aa).

It belongs to the PEPCase type 2 family. In terms of assembly, homotetramer. Requires Mg(2+) as cofactor.

The enzyme catalyses oxaloacetate + phosphate = phosphoenolpyruvate + hydrogencarbonate. Its function is as follows. Catalyzes the irreversible beta-carboxylation of phosphoenolpyruvate (PEP) to form oxaloacetate (OAA), a four-carbon dicarboxylic acid source for the tricarboxylic acid cycle. The polypeptide is Phosphoenolpyruvate carboxylase (Picrophilus torridus (strain ATCC 700027 / DSM 9790 / JCM 10055 / NBRC 100828 / KAW 2/3)).